Reading from the N-terminus, the 483-residue chain is ATP synthase subunit beta (483 aa).

169 to 176 (GGAGVGKT) contacts ATP.

This sequence belongs to the ATPase alpha/beta chains family. As to quaternary structure, F-type ATPases have 2 components, CF(1) - the catalytic core - and CF(0) - the membrane proton channel. CF(1) has five subunits: alpha(3), beta(3), gamma(1), delta(1), epsilon(1). CF(0) has three main subunits: a(1), b(2) and c(9-12). The alpha and beta chains form an alternating ring which encloses part of the gamma chain. CF(1) is attached to CF(0) by a central stalk formed by the gamma and epsilon chains, while a peripheral stalk is formed by the delta and b chains.

It is found in the cell membrane. It catalyses the reaction ATP + H2O + 4 H(+)(in) = ADP + phosphate + 5 H(+)(out). In terms of biological role, produces ATP from ADP in the presence of a proton gradient across the membrane. The catalytic sites are hosted primarily by the beta subunits. In Corynebacterium glutamicum (strain R), this protein is ATP synthase subunit beta.